The chain runs to 138 residues: Cysteine desulfuration protein SufE (138 aa).

The Cysteine persulfide intermediate role is filled by Cys51.

It belongs to the SufE family. In terms of assembly, homodimer. Interacts with SufS.

It is found in the cytoplasm. It participates in cofactor biosynthesis; iron-sulfur cluster biosynthesis. Functionally, participates in cysteine desulfuration mediated by SufS. Cysteine desulfuration mobilizes sulfur from L-cysteine to yield L-alanine and constitutes an essential step in sulfur metabolism for biosynthesis of a variety of sulfur-containing biomolecules. Functions as a sulfur acceptor for SufS, by mediating the direct transfer of the sulfur atom from the S-sulfanylcysteine of SufS, an intermediate product of cysteine desulfuration process. The polypeptide is Cysteine desulfuration protein SufE (Shigella flexneri serotype 5b (strain 8401)).